The chain runs to 259 residues: ARGPKKHLKRINAPKSWMLNKLGGIWATRPSQGPHKLRESLPLSVLLKERLNYALNGRDVTLILNDKEGNVFVDQKVRRDKGYPTGLMDVVRIEKTDQSFRILYDTKGRFVLKSLSKEEAKYKLLKVTAKAIGPNQIPYIVTHDSRTIRFPNPEIKIGDTLKYDLVNNKIENFAHLESGNVCYIQQGNNIGRVGIIQHIEKHQGSFDICHVKDAKGNAFATRLGNIFVLGQGKKLYIELPSGDGVRETILEERKRKFSY.

The region spanning 41–105 is the S4 RNA-binding domain; the sequence is LPLSVLLKER…TDQSFRILYD (65 aa). A Phosphothreonine modification is found at threonine 248. Serine 258 is subject to Phosphoserine.

This sequence belongs to the eukaryotic ribosomal protein eS4 family.

The chain is Small ribosomal subunit protein eS4 from Tetrahymena thermophila.